We begin with the raw amino-acid sequence, 522 residues long: Leucine-rich repeat transmembrane neuronal protein 1 (522 aa).

The N-terminal stretch at 1 to 34 (MDFLLLGLCLYWLLRRPSGVVLCLLGACFQMLPA) is a signal peptide. One can recognise an LRRNT domain in the interval 35–63 (APSGCPQLCRCEGRLLYCEALNPTEAPHN). Over 35-427 (APSGCPQLCR…HAENAVQIHK (393 aa)) the chain is Extracellular. N-linked (GlcNAc...) asparagine glycosylation occurs at Asn63. LRR repeat units lie at residues 64 to 87 (LSGL…QFTG), 89 to 111 (MQLT…AFQK), 112 to 135 (LRRV…TFRP), 137 to 159 (PNLR…LFHG), 161 to 183 (RKLT…IFQD), 184 to 207 (CRSL…SFAG), 209 to 231 (FKLT…HFPR), 233 to 255 (ISLH…LDWV), 256 to 278 (WNLK…VFET), and 279 to 302 (VPHL…ILNS). Residue Asn130 is glycosylated (N-linked (GlcNAc...) asparagine). Residues 314-365 (NLWDCGRNVCALASWLSNFQGRYDGNLQCASPEYAQGEDVLDAVYAFHLCED) form the LRRCT domain. Asn380 is a glycosylation site (N-linked (GlcNAc...) asparagine). The segment at 382–401 (SDLGPPASSATTLADGGEGQ) is disordered. Residues 428–448 (VVTGTMALIFSFLIVVLVLYV) form a helical membrane-spanning segment. Residues 449–522 (SWKCFPASLR…HQQPARECEV (74 aa)) are Cytoplasmic-facing.

The protein belongs to the LRRTM family.

Its subcellular location is the cell membrane. The protein resides in the postsynaptic cell membrane. Its function is as follows. Exhibits strong synaptogenic activity, restricted to excitatory presynaptic differentiation, acting at both pre- and postsynaptic level. This is Leucine-rich repeat transmembrane neuronal protein 1 (LRRTM1) from Pongo abelii (Sumatran orangutan).